The following is a 394-amino-acid chain: D-aspartate oxidase (394 aa).

Ile19, Ala57, Ser58, and Gly62 together coordinate FAD. Residues Leu190–Leu210 form a helical membrane-spanning segment. The N-linked (GlcNAc...) asparagine glycan is linked to Asn214. Residues Arg342, Gly373, and Gln375 each coordinate FAD.

Belongs to the DAMOX/DASOX family. Requires FAD as cofactor.

Its subcellular location is the membrane. It carries out the reaction D-aspartate + O2 + H2O = oxaloacetate + H2O2 + NH4(+). Its function is as follows. Selectively catalyzes the oxidative deamination of acidic amino acids. Protects the organism from the toxicity of D-amino acids. Enables the organism to utilize D-amino acids as a source of nutrients. Enables the organism to utilize D-aspartate and D-asparagine as a source of nitrogen. May play a role in its interaction with the host. This is D-aspartate oxidase from Cryptococcus neoformans var. grubii serotype A (strain H99 / ATCC 208821 / CBS 10515 / FGSC 9487) (Filobasidiella neoformans var. grubii).